Here is a 92-residue protein sequence, read N- to C-terminus: Arrestin-C (92 aa).

It belongs to the arrestin family. In terms of assembly, homodimer; disulfide-linked in response to retinal illumination. Interacts with CXCR4; the interaction is dependent on the C-terminal phosphorylation of CXCR4 and modulates the calcium ion mobilization activity of CXCR4. Interacts with GPR84. Retina and pineal gland.

The protein localises to the photoreceptor inner segment. It localises to the cell projection. It is found in the cilium. The protein resides in the photoreceptor outer segment. May play a role in an as yet undefined retina-specific signal transduction. Could bind to photoactivated-phosphorylated red/green opsins. The sequence is that of Arrestin-C (Arr3) from Rattus norvegicus (Rat).